Reading from the N-terminus, the 95-residue chain is Glutamyl-tRNA(Gln) amidotransferase subunit C 1 (95 aa).

The protein belongs to the GatC family. In terms of assembly, heterotrimer of A, B and C subunits.

The catalysed reaction is L-glutamyl-tRNA(Gln) + L-glutamine + ATP + H2O = L-glutaminyl-tRNA(Gln) + L-glutamate + ADP + phosphate + H(+). The enzyme catalyses L-aspartyl-tRNA(Asn) + L-glutamine + ATP + H2O = L-asparaginyl-tRNA(Asn) + L-glutamate + ADP + phosphate + 2 H(+). Its function is as follows. Allows the formation of correctly charged Asn-tRNA(Asn) or Gln-tRNA(Gln) through the transamidation of misacylated Asp-tRNA(Asn) or Glu-tRNA(Gln) in organisms which lack either or both of asparaginyl-tRNA or glutaminyl-tRNA synthetases. The reaction takes place in the presence of glutamine and ATP through an activated phospho-Asp-tRNA(Asn) or phospho-Glu-tRNA(Gln). This is Glutamyl-tRNA(Gln) amidotransferase subunit C 1 (gatC1) from Clostridium acetobutylicum (strain ATCC 824 / DSM 792 / JCM 1419 / IAM 19013 / LMG 5710 / NBRC 13948 / NRRL B-527 / VKM B-1787 / 2291 / W).